Consider the following 70-residue polypeptide: Large ribosomal subunit protein bL31 (70 aa).

Cys-16, Cys-18, Cys-37, and Cys-40 together coordinate Zn(2+).

The protein belongs to the bacterial ribosomal protein bL31 family. Type A subfamily. Part of the 50S ribosomal subunit. Zn(2+) serves as cofactor.

In terms of biological role, binds the 23S rRNA. The polypeptide is Large ribosomal subunit protein bL31 (Shewanella sediminis (strain HAW-EB3)).